A 312-amino-acid chain; its full sequence is Olfactory receptor 6C2 (312 aa).

Residues 1–23 (MKNHTVIRTFILLGLTGDPHLQV) lie on the Extracellular side of the membrane. N-linked (GlcNAc...) asparagine glycosylation occurs at Asn3. The chain crosses the membrane as a helical span at residues 24 to 44 (LLFIFLFLTYMLSVTGNLTII). The Cytoplasmic portion of the chain corresponds to 45–52 (TLTLVDHH). Residues 53 to 73 (LKTPMYFFLRNFSFLEVSFTT) form a helical membrane-spanning segment. Residues 74–97 (VCIPRFLYNISMGDNTITYNACAS) are Extracellular-facing. An N-linked (GlcNAc...) asparagine glycan is attached at Asn82. Cysteines 95 and 187 form a disulfide. Residues 98–118 (QIFFVILFGATEFFLLAAMSY) form a helical membrane-spanning segment. The Cytoplasmic segment spans residues 119-137 (DRYVAICKPLHYVVIMNNR). A helical membrane pass occupies residues 138–158 (VCTLLVLCCWVAGLMIIVPPL). Topologically, residues 159–195 (SLGLQLEFCDSNAIDHFSCDAGPLLKISCSDTWVIEQ) are extracellular. Residues 196–215 (MVILMAVFALIITLVCVILS) form a helical membrane-spanning segment. At 216 to 235 (YLYIVRTILKFPSVQQRKKA) the chain is on the cytoplasmic side. Residues 236–256 (FSTCSSHMIVVSIAYGSCIFI) traverse the membrane as a helical segment. The Extracellular segment spans residues 257 to 269 (YIKPSAKDEVAIN). Residues 270-290 (KGVSVLTTSVAPLLNPFIYTL) traverse the membrane as a helical segment. Residues 291–312 (RNKQVKQAFSDSIKRIAFLSKK) lie on the Cytoplasmic side of the membrane.

Belongs to the G-protein coupled receptor 1 family.

The protein resides in the cell membrane. In terms of biological role, odorant receptor. In Homo sapiens (Human), this protein is Olfactory receptor 6C2 (OR6C2).